The following is a 210-amino-acid chain: Prolactin-2 (210 aa).

A signal peptide spans M1 to A23. Cystine bridges form between C69–C183 and C200–C210.

Belongs to the somatotropin/prolactin family.

The protein localises to the secreted. The sequence is that of Prolactin-2 (prl2) from Oncorhynchus keta (Chum salmon).